A 299-amino-acid chain; its full sequence is MDATFPSQHNITARPAPGRIRREQCKLAKRLRRQVGQAIADFGMIEANDKIMVCLSGGKDSYTLLDMLLQLRAKAPVPFELTAVNLDQKQPGFPKHVLPEYLSSIGVPYHIIEQDTYSVVTRVVPEGKTLCALCSRMRRGALYAYAETQGFTKIALGHHRDDMVATFFMNLFHHAKLSGMPPKLRSDNGKHVVIRPLAYVSETDIIAYADAREFPIIPCNLCGSQENLQRKQVGVMLKAWEKEYPGRIEQIARALGNIRPSQLADQSLFDFLALGRHSNTPLPNAHAWLAGDLANDTAP.

The PP-loop motif signature appears at 56-61 (SGGKDS). Positions 131, 134, and 222 each coordinate [4Fe-4S] cluster.

Belongs to the TtcA family. In terms of assembly, homodimer. It depends on Mg(2+) as a cofactor. [4Fe-4S] cluster is required as a cofactor.

The protein localises to the cytoplasm. It carries out the reaction cytidine(32) in tRNA + S-sulfanyl-L-cysteinyl-[cysteine desulfurase] + AH2 + ATP = 2-thiocytidine(32) in tRNA + L-cysteinyl-[cysteine desulfurase] + A + AMP + diphosphate + H(+). Its pathway is tRNA modification. Its function is as follows. Catalyzes the ATP-dependent 2-thiolation of cytidine in position 32 of tRNA, to form 2-thiocytidine (s(2)C32). The sulfur atoms are provided by the cysteine/cysteine desulfurase (IscS) system. This is tRNA-cytidine(32) 2-sulfurtransferase from Xylella fastidiosa (strain M23).